The sequence spans 243 residues: tRNA (cytidine/uridine-2'-O-)-methyltransferase TrmJ (243 aa).

Residues 79–81, Gly-114, Ile-134, and 141–143 contribute to the S-adenosyl-L-methionine site; these read TSA and SSL.

Belongs to the class IV-like SAM-binding methyltransferase superfamily. RNA methyltransferase TrmH family. Homodimer.

The protein resides in the cytoplasm. The enzyme catalyses cytidine(32) in tRNA + S-adenosyl-L-methionine = 2'-O-methylcytidine(32) in tRNA + S-adenosyl-L-homocysteine + H(+). It catalyses the reaction uridine(32) in tRNA + S-adenosyl-L-methionine = 2'-O-methyluridine(32) in tRNA + S-adenosyl-L-homocysteine + H(+). Functionally, catalyzes the formation of 2'O-methylated cytidine (Cm32) or 2'O-methylated uridine (Um32) at position 32 in tRNA. This chain is tRNA (cytidine/uridine-2'-O-)-methyltransferase TrmJ (trmJ), found in Salmonella paratyphi A (strain ATCC 9150 / SARB42).